We begin with the raw amino-acid sequence, 311 residues long: Probable deoxyhypusine synthase (311 aa).

Lys-284 (nucleophile) is an active-site residue.

This sequence belongs to the deoxyhypusine synthase family. NAD(+) serves as cofactor.

It carries out the reaction [eIF5A protein]-L-lysine + spermidine = [eIF5A protein]-deoxyhypusine + propane-1,3-diamine. The protein operates within protein modification; eIF5A hypusination. Catalyzes the NAD-dependent oxidative cleavage of spermidine and the subsequent transfer of the butylamine moiety of spermidine to the epsilon-amino group of a specific lysine residue of the eIF-5A precursor protein to form the intermediate deoxyhypusine residue. The protein is Probable deoxyhypusine synthase of Sulfolobus acidocaldarius (strain ATCC 33909 / DSM 639 / JCM 8929 / NBRC 15157 / NCIMB 11770).